The chain runs to 422 residues: Glutamate-1-semialdehyde 2,1-aminomutase (422 aa).

The residue at position 258 (Lys258) is an N6-(pyridoxal phosphate)lysine.

It belongs to the class-III pyridoxal-phosphate-dependent aminotransferase family. HemL subfamily. In terms of assembly, homodimer. Requires pyridoxal 5'-phosphate as cofactor.

Its subcellular location is the cytoplasm. The enzyme catalyses (S)-4-amino-5-oxopentanoate = 5-aminolevulinate. It participates in porphyrin-containing compound metabolism; protoporphyrin-IX biosynthesis; 5-aminolevulinate from L-glutamyl-tRNA(Glu): step 2/2. The protein is Glutamate-1-semialdehyde 2,1-aminomutase of Chlamydia muridarum (strain MoPn / Nigg).